The sequence spans 320 residues: Cytochrome c biogenesis protein CcsA (320 aa).

The next 7 membrane-spanning stretches (helical) occupy residues 13-33, 46-66, 73-93, 147-167, 226-246, 259-274, and 289-309; these read ISFSVVSIVITIHFLTLFLLV, GMIVTFFCITGLLVTRWIYSG, LYESLIFLSWGFSLIHMVSYL, MVLGYAALLCGSLLSVALLVI, IISLGFIFLTIGILSGAVWAN, ETWAFITWTVFAIYFH, and VASMGFLIIWICYFGVNLLGI.

This sequence belongs to the CcmF/CycK/Ccl1/NrfE/CcsA family. As to quaternary structure, may interact with Ccs1.

It is found in the plastid. The protein localises to the chloroplast thylakoid membrane. Its function is as follows. Required during biogenesis of c-type cytochromes (cytochrome c6 and cytochrome f) at the step of heme attachment. This Gossypium barbadense (Sea Island cotton) protein is Cytochrome c biogenesis protein CcsA.